The primary structure comprises 313 residues: Isoaspartyl peptidase (313 aa).

The active-site Nucleophile is the threonine 179. Substrate contacts are provided by residues 207–210 and 230–233; these read RVGD and TGTG.

This sequence belongs to the Ntn-hydrolase family. Heterotetramer of two alpha and two beta chains arranged as a dimer of alpha/beta heterodimers. Autocleaved. Generates the alpha and beta subunits. The beta subunit is thought to be responsible for the nucleophile hydrolase activity.

The enzyme catalyses Cleavage of a beta-linked Asp residue from the N-terminus of a polypeptide.. Its function is as follows. Degrades proteins damaged by L-isoaspartyl residue formation (also known as beta-Asp residues). Degrades L-isoaspartyl-containing di- and tripeptides. Acts best on iso-Asp-Leu, followed by iso-Asp-Ala, -His and to a lesser extent iso-Asp-Lys, -Phe and iso-Asp-Leu-Ala. Does not act on internal iso-Asp bonds (Als-iso-Asp-Leu-Ala). Does not act on alpha-Asp bonds. Has poor L-asparaginase activity. This chain is Isoaspartyl peptidase (iaaA), found in Salmonella typhimurium (strain LT2 / SGSC1412 / ATCC 700720).